Consider the following 665-residue polypeptide: DNA ligase (665 aa).

NAD(+) is bound by residues 32 to 36 (DSEYD), 81 to 82 (SL), and Glu-110. The active-site N6-AMP-lysine intermediate is Lys-112. Arg-133, Glu-167, Lys-283, and Lys-307 together coordinate NAD(+). 4 residues coordinate Zn(2+): Cys-401, Cys-404, Cys-419, and Cys-424. The BRCT domain maps to 586 to 665 (EGHPDFSGKT…AAFIEKQNGI (80 aa)).

The protein belongs to the NAD-dependent DNA ligase family. LigA subfamily. It depends on Mg(2+) as a cofactor. Mn(2+) serves as cofactor.

The enzyme catalyses NAD(+) + (deoxyribonucleotide)n-3'-hydroxyl + 5'-phospho-(deoxyribonucleotide)m = (deoxyribonucleotide)n+m + AMP + beta-nicotinamide D-nucleotide.. Functionally, DNA ligase that catalyzes the formation of phosphodiester linkages between 5'-phosphoryl and 3'-hydroxyl groups in double-stranded DNA using NAD as a coenzyme and as the energy source for the reaction. It is essential for DNA replication and repair of damaged DNA. The protein is DNA ligase of Staphylococcus epidermidis (strain ATCC 12228 / FDA PCI 1200).